We begin with the raw amino-acid sequence, 290 residues long: Ribosomal RNA small subunit methyltransferase A (290 aa).

Residues asparagine 27, leucine 29, glycine 54, glutamate 75, aspartate 100, and asparagine 125 each contribute to the S-adenosyl-L-methionine site.

This sequence belongs to the class I-like SAM-binding methyltransferase superfamily. rRNA adenine N(6)-methyltransferase family. RsmA subfamily.

It is found in the cytoplasm. It catalyses the reaction adenosine(1518)/adenosine(1519) in 16S rRNA + 4 S-adenosyl-L-methionine = N(6)-dimethyladenosine(1518)/N(6)-dimethyladenosine(1519) in 16S rRNA + 4 S-adenosyl-L-homocysteine + 4 H(+). In terms of biological role, specifically dimethylates two adjacent adenosines (A1518 and A1519) in the loop of a conserved hairpin near the 3'-end of 16S rRNA in the 30S particle. May play a critical role in biogenesis of 30S subunits. The polypeptide is Ribosomal RNA small subunit methyltransferase A (Streptococcus thermophilus (strain CNRZ 1066)).